We begin with the raw amino-acid sequence, 240 residues long: Transmembrane emp24 domain-containing protein 6 (240 aa).

Positions 1 to 21 (MFPLLFVAGLVVLNLVSSARS) are cleaved as a signal peptide. Residues 22 to 200 (QKTEPLSGTG…FFLLQSNYNY (179 aa)) lie on the Lumenal side of the membrane. The region spanning 53–138 (TECFWQFAHQ…SVQVYLNFGV (86 aa)) is the GOLD domain. N-linked (GlcNAc...) asparagine glycosylation is found at asparagine 107 and asparagine 156. A helical membrane pass occupies residues 201-223 (VNWWSTAQSLVIVLSGILQLYFL). The Cytoplasmic portion of the chain corresponds to 224–240 (KRLFNTPMTTETQKPRC).

Belongs to the EMP24/GP25L family.

It is found in the endoplasmic reticulum membrane. The polypeptide is Transmembrane emp24 domain-containing protein 6 (TMED6) (Bos taurus (Bovine)).